The chain runs to 76 residues: Zinc finger protein 706 (76 aa).

The span at 1-13 (MARGQQKIQSQQK) shows a compositional bias: low complexity. 2 disordered regions span residues 1–32 (MARG…QKAA) and 53–76 (TFKQ…DVQA). 2 stretches are compositionally biased toward basic and acidic residues: residues 17–31 (KQAE…DQKA) and 53–62 (TFKQHFESKH). A C2H2-type zinc finger spans residues 39 to 62 (YTCTVCRTQMPDPKTFKQHFESKH).

The protein resides in the cytoplasm. It localises to the nucleus. Functionally, transcription repressor involved in the exit of embryonic stem cells (ESCs) from self-renewal. The polypeptide is Zinc finger protein 706 (Gallus gallus (Chicken)).